Consider the following 190-residue polypeptide: Elongation factor P (190 aa).

Lys34 carries the N6-(3,6-diaminohexanoyl)-5-hydroxylysine modification.

This sequence belongs to the elongation factor P family. May be beta-lysylated on the epsilon-amino group of Lys-34 by the combined action of EpmA and EpmB, and then hydroxylated on the C5 position of the same residue by EpmC (if this protein is present). Lysylation is critical for the stimulatory effect of EF-P on peptide-bond formation. The lysylation moiety may extend toward the peptidyltransferase center and stabilize the terminal 3-CCA end of the tRNA. Hydroxylation of the C5 position on Lys-34 may allow additional potential stabilizing hydrogen-bond interactions with the P-tRNA.

It localises to the cytoplasm. Its pathway is protein biosynthesis; polypeptide chain elongation. Its function is as follows. Involved in peptide bond synthesis. Alleviates ribosome stalling that occurs when 3 or more consecutive Pro residues or the sequence PPG is present in a protein, possibly by augmenting the peptidyl transferase activity of the ribosome. Modification of Lys-34 is required for alleviation. The polypeptide is Elongation factor P (Hahella chejuensis (strain KCTC 2396)).